Here is a 366-residue protein sequence, read N- to C-terminus: Chaperone protein DnaJ (366 aa).

One can recognise a J domain in the interval 5–69 (DYYEVLGVSK…QKRAQYDQFG (65 aa)). The segment at 128-210 (GKELNVEIPV…CHGTGKVRKR (83 aa)) adopts a CR-type zinc-finger fold. Zn(2+) contacts are provided by Cys141, Cys144, Cys158, Cys161, Cys184, Cys187, Cys198, and Cys201. 4 CXXCXGXG motif repeats span residues 141–148 (CDTCHGSG), 158–165 (CKYCSGTG), 184–191 (CRHCSGTG), and 198–205 (CTTCHGTG).

Belongs to the DnaJ family. In terms of assembly, homodimer. Zn(2+) serves as cofactor.

It localises to the cytoplasm. Participates actively in the response to hyperosmotic and heat shock by preventing the aggregation of stress-denatured proteins and by disaggregating proteins, also in an autonomous, DnaK-independent fashion. Unfolded proteins bind initially to DnaJ; upon interaction with the DnaJ-bound protein, DnaK hydrolyzes its bound ATP, resulting in the formation of a stable complex. GrpE releases ADP from DnaK; ATP binding to DnaK triggers the release of the substrate protein, thus completing the reaction cycle. Several rounds of ATP-dependent interactions between DnaJ, DnaK and GrpE are required for fully efficient folding. Also involved, together with DnaK and GrpE, in the DNA replication of plasmids through activation of initiation proteins. The chain is Chaperone protein DnaJ from Bacillus cytotoxicus (strain DSM 22905 / CIP 110041 / 391-98 / NVH 391-98).